The following is a 986-amino-acid chain: Ephrin type-A receptor 4-A (986 aa).

An N-terminal signal peptide occupies residues 1 to 20 (MAGIVHGILFCGLFGLCWAV). At 21-547 (TGSRIYPASE…MIGEGASPTV (527 aa)) the chain is on the extracellular side. In terms of domain architecture, Eph LBD spans 30–209 (EVTLLDSRSV…FYKKCPLTVR (180 aa)). Fibronectin type-III domains are found at residues 328–438 (PPSA…TNQA) and 439–536 (APST…TVPS). 2 N-linked (GlcNAc...) asparagine glycosylation sites follow: asparagine 340 and asparagine 407. Residues 548–569 (LLVSVAGSIVLVVILIAAFVIS) traverse the membrane as a helical segment. Residues 570 to 986 (RRRSKYSKAK…QQIQGRMVPV (417 aa)) lie on the Cytoplasmic side of the membrane. 2 positions are modified to phosphotyrosine; by autocatalysis: tyrosine 595 and tyrosine 601. The Protein kinase domain occupies 620-881 (IKIEKVIGVG…QIVSMLDKLI (262 aa)). ATP is bound by residues 626 to 634 (IGVGEFGEV) and lysine 652. The active-site Proton acceptor is aspartate 745. Phosphotyrosine; by autocatalysis occurs at positions 778 and 928. In terms of domain architecture, SAM spans 911-975 (SQVASVLDWL…LSSVQGMRTQ (65 aa)). The PDZ-binding motif lies at 984 to 986 (VPV).

The protein belongs to the protein kinase superfamily. Tyr protein kinase family. Ephrin receptor subfamily.

The protein localises to the cell membrane. Its subcellular location is the early endosome. It catalyses the reaction L-tyrosyl-[protein] + ATP = O-phospho-L-tyrosyl-[protein] + ADP + H(+). Its function is as follows. Receptor tyrosine kinase which binds membrane-bound ephrin family ligands residing on adjacent cells, leading to contact-dependent bidirectional signaling into neighboring cells. The signaling pathway downstream of the receptor is referred to as forward signaling while the signaling pathway downstream of the ephrin ligand is referred to as reverse signaling. Highly promiscuous, it has the unique property among Eph receptors to bind and to be physiologically activated by both GPI-anchored ephrin-A and transmembrane ephrin-B ligands including EFNA1 and EFNB3. Upon activation by ephrin ligands, modulates cell morphology and integrin-dependent cell adhesion through regulation of the Rac, Rap and Rho GTPases activity. Plays an important role in the development of the nervous system controlling different steps of axonal guidance including the establishment of the corticospinal projections. This Xenopus laevis (African clawed frog) protein is Ephrin type-A receptor 4-A (epha4-a).